Reading from the N-terminus, the 267-residue chain is Thiamine thiazole synthase (267 aa).

NAD(+)-binding positions include Ser-41, 60–61, Gly-68, Val-132, and 160–162; these read ER and HVD. Fe cation is bound by residues Asp-162 and His-177. Residue Met-227 coordinates NAD(+). Arg-237 serves as a coordination point for glycine.

It belongs to the THI4 family. Homooctamer; tetramer of dimers. Requires Fe(2+) as cofactor.

It carries out the reaction hydrogen sulfide + glycine + NAD(+) = ADP-5-ethyl-4-methylthiazole-2-carboxylate + nicotinamide + 3 H2O + H(+). The protein operates within cofactor biosynthesis; thiamine diphosphate biosynthesis. In terms of biological role, involved in the biosynthesis of the thiazole moiety of thiamine. Catalyzes the conversion of NAD and glycine to adenosine diphosphate 5-(2-hydroxyethyl)-4-methylthiazole-2-carboxylate (ADT), an adenylated thiazole intermediate, using free sulfide as a source of sulfur. The polypeptide is Thiamine thiazole synthase (Saccharolobus islandicus (strain L.S.2.15 / Lassen #1) (Sulfolobus islandicus)).